We begin with the raw amino-acid sequence, 910 residues long: MSSKISDLTSTQNKPLLVTQQLIEKYYEQILGTSQNIIPILNPKNKFIRPSKDNSDVERVEEDAGKRLQTGKNKTTNKVNFNLDTGNEDKLDDDQETVTENENNDIEMVETDEGEDERQGSSLASKCKSFLYNVFVGNYERDILIDKVCSQKQHAMSFEEWCSAGARLDDLTGKTEWKQKLESPLYDYKLIKDLTSRMREERLNRNYAQLLYIIRTNWVRNLGNMGNVNLYRHSHVGTKYLIDEYMMESRLALESLMESDLDDSYLLGILQQTRRNIGRTALVLSGGGTFGLFHIGVLGTLFELDLLPRVISGSSAGAIVASILSVHHKEEIPVLLNHILDKEFNIFKDDKQKSESENLLIKISRFFKNGTWFDNKHLVNTMIEFLGDLTFREAYNRTGKILNITVSPASLFEQPRLLNNLTAPNVLIWSAVCASCSLPGIFPSSPLYEKDPKTGERKPWTGSSSVKFVDGSVDNDLPISRLSEMFNVDHIIACQVNIHVFPFLKLSLSCVGGEIEDEFSARLKQNLSSIYNFMANEAIHILEIGSEMGIAKNALTKLRSVLSQQYSGDITILPDMCMLFRIKELLSNPTKEFLLREITNGAKATWPKVSIIQNHCGQEFALDKAISYIKGRMIVTSSLKTPFQFADSVIGLIKAPEQTSDESKNPENSTLLTRTPTKGDNHISNVLDDNLLESESTNSLLLLRENASTYGRSPSGFRPRYSITSASLNPRHQRRKSDTISTSRRPAKSFSFSVASPTSRMLRQSSKINGHPPPILQKKTSMGRLMFPMDAKTYDPESHELIPHSASIETPAMVDKKLHFGRKSRYLRHMNKKWVSSSNILYTDSDKEDHPTLRLISNFDSDAMIHSDLAGNFRRHSIDGRPPSQATKSSPFRSRPSSSTQHKSTTSFTQ.

Positions 51 to 66 are enriched in basic and acidic residues; the sequence is SKDNSDVERVEEDAGK. The disordered stretch occupies residues 51 to 120; that stretch reads SKDNSDVERV…TDEGEDERQG (70 aa). A Phosphoserine modification is found at Ser55. Residues 70-85 are compositionally biased toward polar residues; sequence TGKNKTTNKVNFNLDT. The segment covering 90-116 has biased composition (acidic residues); sequence KLDDDQETVTENENNDIEMVETDEGED. The PNPLA domain occupies 282 to 483; it reads LVLSGGGTFG…DNDLPISRLS (202 aa). The GXGXXG motif lies at 286-291; that stretch reads GGGTFG. The short motif at 313–317 is the GXSXG element; sequence GSSAG. Ser315 serves as the catalytic Nucleophile. Asp470 functions as the Proton acceptor in the catalytic mechanism. Disordered stretches follow at residues 657-683 and 713-777; these read EQTS…DNHI and SPSG…PILQ. A compositionally biased stretch (polar residues) spans 666 to 683; the sequence is PENSTLLTRTPTKGDNHI. The residue at position 675 (Thr675) is a Phosphothreonine; by Cdk1. Ser737, Ser749, Ser751, and Ser836 each carry phosphoserine. Positions 739 to 768 are enriched in polar residues; the sequence is TISTSRRPAKSFSFSVASPTSRMLRQSSKI. Residues 874–910 form a disordered region; it reads RRHSIDGRPPSQATKSSPFRSRPSSSTQHKSTTSFTQ. Residues 889–899 are compositionally biased toward low complexity; the sequence is SSPFRSRPSSS. Phosphoserine; by Cdk1 is present on Ser890. Positions 900–910 are enriched in polar residues; sequence TQHKSTTSFTQ.

Post-translationally, phosphorylation at Thr-675 and Ser-890 by Cdk1/CDC28 stimulates enzyme activity in vivo.

It localises to the lipid droplet. It catalyses the reaction a triacylglycerol + H2O = a diacylglycerol + a fatty acid + H(+). The catalysed reaction is 1,2,3-tri-(9Z-octadecenoyl)-glycerol + H2O = di-(9Z)-octadecenoylglycerol + (9Z)-octadecenoate + H(+). The enzyme catalyses 1,2-dihexadecanoyl-sn-glycero-3-phosphocholine + H2O = 1-hexadecanoyl-sn-glycero-3-phosphocholine + hexadecanoate + H(+). It carries out the reaction cholesteryl (9Z-octadecenoate) + H2O = cholesterol + (9Z)-octadecenoate + H(+). It catalyses the reaction 1-(9Z-octadecenoyl)-sn-glycero-3-phosphate + (9Z)-octadecenoyl-CoA = 1,2-di-(9Z-octadecenoyl)-sn-glycero-3-phosphate + CoA. With respect to regulation, phosphorylated and activated by cyclin-dependent kinase 1 (Cdk1/CDC28). Loses its lipolytic activity in cells lacking nonpolar lipids, but retains its side activity as lysophospholipid acyltransferase. Lipid particle-localized triacylglycerol (TAG) lipase. The lipid droplet/particle is a lipid storage compartment which serves as a depot of energy and building blocks for membrane lipid biosynthesis. Involved in the mobilization of the non-polar storage lipids triacylglycerols (TAGs) from lipid particles by hydrolysis of TAGs, releasing and supplying specific fatty acids to the appropriate metabolic pathways. Also has steryl ester (SE) hydrolase and phospholipase A(2) (PLA(2)) activities, and catalyzes the acylation of lysophosphatidic acid (LPA). Contributes to early bud formation in late G1 phase of the cell cycle upon phosphorylation and activation by cyclin-dependent kinase 1 (Cdk1/CDC28). The protein is Triacylglycerol lipase 4 (TGL4) of Saccharomyces cerevisiae (strain ATCC 204508 / S288c) (Baker's yeast).